We begin with the raw amino-acid sequence, 535 residues long: uncharacterized protein (535 aa).

6 helical membrane passes run 55–75 (LITI…IPII), 82–102 (FMPV…IMFV), 115–135 (IICF…ILRH), 143–163 (AFVL…LMLF), 201–221 (STIL…TLIM), and 346–366 (VSGP…NVFA).

It is found in the membrane. This is an uncharacterized protein from Schizosaccharomyces pombe (strain 972 / ATCC 24843) (Fission yeast).